Here is a 409-residue protein sequence, read N- to C-terminus: TM2 domain-containing protein ZK858.5 (409 aa).

Residues 8 to 55 (VKPWIVRIILIVGGLFGAHRLYLKQVPEAFVFFSTLGVLLIGWLYDSF) form the TM2 domain. A run of 6 helical transmembrane segments spans residues 10–30 (PWIVRIILIVGGLFGAHRLYL), 37–57 (FVFFSTLGVLLIGWLYDSFMF), 104–124 (VLYGSYIGLATWLACTVTFGW), 127–147 (INLIPFICVVALGITAGIYII), 168–190 (MFIMVRLAQTTVFRAIFLTAIVS), and 209–229 (HFLFWSSLFLMLVCVILLGCS).

Belongs to the TM2 family.

The protein localises to the membrane. The chain is TM2 domain-containing protein ZK858.5 from Caenorhabditis elegans.